A 509-amino-acid chain; its full sequence is UDP-N-acetylmuramyl-tripeptide synthetase (509 aa).

Residue 124 to 130 participates in ATP binding; the sequence is GTNGKTS. UDP-N-acetyl-alpha-D-muramoyl-L-alanyl-D-glutamate is bound by residues 164-165, Ser191, and Arg199; that span reads TT. Residue Lys231 is modified to N6-carboxylysine.

It belongs to the MurCDEF family. MurE subfamily. In terms of processing, carboxylation is probably crucial for Mg(2+) binding and, consequently, for the gamma-phosphate positioning of ATP.

Its subcellular location is the cytoplasm. The protein operates within cell wall biogenesis; peptidoglycan biosynthesis. Its function is as follows. Catalyzes the addition of an amino acid to the nucleotide precursor UDP-N-acetylmuramoyl-L-alanyl-D-glutamate (UMAG) in the biosynthesis of bacterial cell-wall peptidoglycan. The chain is UDP-N-acetylmuramyl-tripeptide synthetase from Tropheryma whipplei (strain Twist) (Whipple's bacillus).